The following is a 105-amino-acid chain: Putative membrane protein insertion efficiency factor (105 aa).

The tract at residues 76–105 is disordered; it reads GHPGGVDPVPPGPHETPRKTSTHDDEPPSR. Residues 90–105 show a composition bias toward basic and acidic residues; that stretch reads ETPRKTSTHDDEPPSR.

Belongs to the UPF0161 family.

Its subcellular location is the cell inner membrane. In terms of biological role, could be involved in insertion of integral membrane proteins into the membrane. This Chromohalobacter salexigens (strain ATCC BAA-138 / DSM 3043 / CIP 106854 / NCIMB 13768 / 1H11) protein is Putative membrane protein insertion efficiency factor.